The chain runs to 160 residues: Ribosomal RNA large subunit methyltransferase H (160 aa).

S-adenosyl-L-methionine is bound by residues Leu76, Gly108, and 127 to 132; that span reads LGKMTW.

This sequence belongs to the RNA methyltransferase RlmH family. In terms of assembly, homodimer.

Its subcellular location is the cytoplasm. The enzyme catalyses pseudouridine(1915) in 23S rRNA + S-adenosyl-L-methionine = N(3)-methylpseudouridine(1915) in 23S rRNA + S-adenosyl-L-homocysteine + H(+). Its function is as follows. Specifically methylates the pseudouridine at position 1915 (m3Psi1915) in 23S rRNA. The chain is Ribosomal RNA large subunit methyltransferase H from Rhizobium etli (strain CIAT 652).